Consider the following 286-residue polypeptide: Urease accessory protein UreD (286 aa).

It belongs to the UreD family. As to quaternary structure, ureD, UreF and UreG form a complex that acts as a GTP-hydrolysis-dependent molecular chaperone, activating the urease apoprotein by helping to assemble the nickel containing metallocenter of UreC. The UreE protein probably delivers the nickel.

The protein resides in the cytoplasm. In terms of biological role, required for maturation of urease via the functional incorporation of the urease nickel metallocenter. This Rhodopseudomonas palustris (strain BisA53) protein is Urease accessory protein UreD.